The primary structure comprises 79 residues: ATP synthase subunit c (79 aa).

A run of 2 helical transmembrane segments spans residues 11–31 (MAAA…IGIL) and 53–73 (FFIV…LGLY).

Belongs to the ATPase C chain family. F-type ATPases have 2 components, F(1) - the catalytic core - and F(0) - the membrane proton channel. F(1) has five subunits: alpha(3), beta(3), gamma(1), delta(1), epsilon(1). F(0) has three main subunits: a(1), b(2) and c(10-14). The alpha and beta chains form an alternating ring which encloses part of the gamma chain. F(1) is attached to F(0) by a central stalk formed by the gamma and epsilon chains, while a peripheral stalk is formed by the delta and b chains.

Its subcellular location is the cell inner membrane. In terms of biological role, f(1)F(0) ATP synthase produces ATP from ADP in the presence of a proton or sodium gradient. F-type ATPases consist of two structural domains, F(1) containing the extramembraneous catalytic core and F(0) containing the membrane proton channel, linked together by a central stalk and a peripheral stalk. During catalysis, ATP synthesis in the catalytic domain of F(1) is coupled via a rotary mechanism of the central stalk subunits to proton translocation. Functionally, key component of the F(0) channel; it plays a direct role in translocation across the membrane. A homomeric c-ring of between 10-14 subunits forms the central stalk rotor element with the F(1) delta and epsilon subunits. The sequence is that of ATP synthase subunit c from Citrobacter koseri (strain ATCC BAA-895 / CDC 4225-83 / SGSC4696).